We begin with the raw amino-acid sequence, 363 residues long: Chorismate synthase (363 aa).

Positions 48 and 54 each coordinate NADP(+). FMN contacts are provided by residues 125-127 (RSS), 237-238 (NA), Gly-277, 292-296 (KPTSS), and Arg-318.

It belongs to the chorismate synthase family. In terms of assembly, homotetramer. Requires FMNH2 as cofactor.

The enzyme catalyses 5-O-(1-carboxyvinyl)-3-phosphoshikimate = chorismate + phosphate. It participates in metabolic intermediate biosynthesis; chorismate biosynthesis; chorismate from D-erythrose 4-phosphate and phosphoenolpyruvate: step 7/7. In terms of biological role, catalyzes the anti-1,4-elimination of the C-3 phosphate and the C-6 proR hydrogen from 5-enolpyruvylshikimate-3-phosphate (EPSP) to yield chorismate, which is the branch point compound that serves as the starting substrate for the three terminal pathways of aromatic amino acid biosynthesis. This reaction introduces a second double bond into the aromatic ring system. The protein is Chorismate synthase of Ectopseudomonas mendocina (strain ymp) (Pseudomonas mendocina).